The sequence spans 515 residues: Fibril protein (515 aa).

Met1 carries the blocked amino end (Met) modification. Helical regions lie at residues 21 to 34 (VKKY…IQHV), 206 to 228 (HKFK…FNLL), 357 to 376 (KIET…AEKC), and 426 to 440 (SNEF…LKDV).

Its subcellular location is the cytoplasm. The protein localises to the cytoskeleton. Functionally, acts as a cytoskeletal structure involved in the shape and motility of spiroplasmas. The sequence is that of Fibril protein from Spiroplasma citri.